The following is a 718-amino-acid chain: Probable glycerol-3-phosphate acyltransferase, mitochondrial (718 aa).

The HXXXXD motif motif lies at 167–172 (HRSHLD). The chain crosses the membrane as a helical span at residues 409–425 (MMCSISPVAVVSCLLLA).

Belongs to the GPAT/DAPAT family.

The protein resides in the mitochondrion membrane. The enzyme catalyses sn-glycerol 3-phosphate + an acyl-CoA = a 1-acyl-sn-glycero-3-phosphate + CoA. Its pathway is phospholipid metabolism; CDP-diacylglycerol biosynthesis; CDP-diacylglycerol from sn-glycerol 3-phosphate: step 1/3. The protein is Probable glycerol-3-phosphate acyltransferase, mitochondrial (acl-6) of Caenorhabditis elegans.